Consider the following 556-residue polypeptide: Phenylalanine--tRNA ligase beta subunit (556 aa).

The B5 domain occupies 278 to 354 (LTPKEFEVSF…IAYGYNNIDP (77 aa)). Mg(2+) is bound by residues Asp332, Asp338, Glu341, and Asp342.

The protein belongs to the phenylalanyl-tRNA synthetase beta subunit family. Type 2 subfamily. Tetramer of two alpha and two beta subunits. Requires Mg(2+) as cofactor.

Its subcellular location is the cytoplasm. It catalyses the reaction tRNA(Phe) + L-phenylalanine + ATP = L-phenylalanyl-tRNA(Phe) + AMP + diphosphate + H(+). This chain is Phenylalanine--tRNA ligase beta subunit, found in Pyrococcus furiosus (strain ATCC 43587 / DSM 3638 / JCM 8422 / Vc1).